We begin with the raw amino-acid sequence, 475 residues long: Ribulose bisphosphate carboxylase large chain (475 aa).

Residues 1-2 (MS) constitute a propeptide that is removed on maturation. Position 3 is an N-acetylproline (Pro-3). Residue Lys-14 is modified to N6,N6,N6-trimethyllysine. Positions 123 and 173 each coordinate substrate. The Proton acceptor role is filled by Lys-175. Lys-177 contributes to the substrate binding site. Lys-201, Asp-203, and Glu-204 together coordinate Mg(2+). Position 201 is an N6-carboxylysine (Lys-201). Catalysis depends on His-294, which acts as the Proton acceptor. Arg-295, His-327, and Ser-379 together coordinate substrate.

Belongs to the RuBisCO large chain family. Type I subfamily. Heterohexadecamer of 8 large chains and 8 small chains; disulfide-linked. The disulfide link is formed within the large subunit homodimers. The cofactor is Mg(2+). The disulfide bond which can form in the large chain dimeric partners within the hexadecamer appears to be associated with oxidative stress and protein turnover.

The protein resides in the plastid. The protein localises to the chloroplast. The catalysed reaction is 2 (2R)-3-phosphoglycerate + 2 H(+) = D-ribulose 1,5-bisphosphate + CO2 + H2O. It catalyses the reaction D-ribulose 1,5-bisphosphate + O2 = 2-phosphoglycolate + (2R)-3-phosphoglycerate + 2 H(+). Its function is as follows. RuBisCO catalyzes two reactions: the carboxylation of D-ribulose 1,5-bisphosphate, the primary event in carbon dioxide fixation, as well as the oxidative fragmentation of the pentose substrate in the photorespiration process. Both reactions occur simultaneously and in competition at the same active site. This Populus tremuloides (Quaking aspen) protein is Ribulose bisphosphate carboxylase large chain.